The primary structure comprises 264 residues: tRNA pseudouridine synthase A (264 aa).

The active-site Nucleophile is Asp-51. Tyr-109 contributes to the substrate binding site.

This sequence belongs to the tRNA pseudouridine synthase TruA family. Homodimer.

The enzyme catalyses uridine(38/39/40) in tRNA = pseudouridine(38/39/40) in tRNA. In terms of biological role, formation of pseudouridine at positions 38, 39 and 40 in the anticodon stem and loop of transfer RNAs. This chain is tRNA pseudouridine synthase A, found in Polaromonas sp. (strain JS666 / ATCC BAA-500).